The sequence spans 500 residues: Oryzalexin D synthase (500 aa).

A helical transmembrane segment spans residues 4 to 24 (SQMWLLWGALSVALFFYFSTL). Cysteine 442 serves as a coordination point for heme.

It belongs to the cytochrome P450 family. Requires heme as cofactor.

It localises to the membrane. The enzyme catalyses ent-cassa-12,15-diene + reduced [NADPH--hemoprotein reductase] + O2 = ent-11beta-hydroxycassa-12,15-diene + oxidized [NADPH--hemoprotein reductase] + H2O + H(+). It catalyses the reaction ent-sandaracopimaradien-3beta-ol + reduced [NADPH--hemoprotein reductase] + O2 = oryzalexin D + oxidized [NADPH--hemoprotein reductase] + H2O + H(+). Functionally, enzyme of the diterpenoid metabolism involved in the biosynthesis of both phytocassane and the oryzalexin class of phytoalexins. Can hydroxylate syn-pimaradiene, ent-pimaradiene, ent-sandaracopimaradiene, ent-isokaurene, ent-kaurene, and ent-cassadiene, but no activity with syn-stemodene, syn-stemarene, syn-labdatriene, C11-alpha-hydroxy-ent-cassadiene or syn-pimadien-19-oic acid as substrates. Hydroxylates 3-alpha-hydroxy-ent-sandaracopimaradiene at C-7-beta, resulting in a 3-alpha,7-beta-diol corresponding to oryzalexins D. In Oryza sativa subsp. japonica (Rice), this protein is Oryzalexin D synthase.